We begin with the raw amino-acid sequence, 79 residues long: UPF0180 protein BCB4264_A1446 (79 aa).

This sequence belongs to the UPF0180 family.

The protein is UPF0180 protein BCB4264_A1446 of Bacillus cereus (strain B4264).